Reading from the N-terminus, the 247-residue chain is Large ribosomal subunit protein uL24m (247 aa).

One can recognise a KOW domain in the interval 84–117 (FFRGDRIEVLVGKDKGKQGIVTQVIPERNWVIVE).

It belongs to the universal ribosomal protein uL24 family. As to quaternary structure, component of the mitochondrial ribosome large subunit (39S) which comprises a 16S rRNA and about 50 distinct proteins.

Its subcellular location is the mitochondrion. The polypeptide is Large ribosomal subunit protein uL24m (mRpL24) (Drosophila pseudoobscura pseudoobscura (Fruit fly)).